A 948-amino-acid chain; its full sequence is Sensor histidine kinase RcsC (948 aa).

The Cytoplasmic portion of the chain corresponds to 1 to 20 (MKYLASFRTTLKVSRYLFRA). Residues 21–41 (LALLIWLLIAFVSVFYIVNAL) traverse the membrane as a helical segment. Residues 42 to 313 (HQRESEIRQE…PVDLVLERIR (272 aa)) lie on the Periplasmic side of the membrane. The chain crosses the membrane as a helical span at residues 314 to 334 (ILILNAILLNVLVGAGLFTLA). The Cytoplasmic segment spans residues 335 to 948 (RMYERRIFIP…YAERVRKTRA (614 aa)). Residues 357-425 (QFNRKIVASA…VLTSNNTNLQ (69 aa)) form the PAS domain. One can recognise a Histidine kinase domain in the interval 476-692 (TVSHELRTPL…QFTLRIPLYG (217 aa)). Phosphohistidine; by autocatalysis is present on His-479. The 101-residue stretch at 705 to 805 (AGTCCWLAVR…ARIYSIELDS (101 aa)) folds into the ABL domain. A Response regulatory domain is found at 826–940 (MILVVDDHPI…ALKQTLAVYA (115 aa)). At Asp-875 the chain carries 4-aspartylphosphate.

This sequence belongs to the RcsC family. Interacts with RcsD. Post-translationally, autophosphorylated. Activation probably requires a transfer of a phosphate group from a His in the transmitter domain to an Asp in the receiver domain.

The protein localises to the cell inner membrane. The catalysed reaction is ATP + protein L-histidine = ADP + protein N-phospho-L-histidine.. Component of the Rcs signaling system, which controls transcription of numerous genes. RcsC functions as a membrane-associated protein kinase that phosphorylates RcsD in response to environmental signals. The phosphoryl group is then transferred to the response regulator RcsB. This is Sensor histidine kinase RcsC from Salmonella typhi.